A 415-amino-acid polypeptide reads, in one-letter code: Serine--tRNA ligase (415 aa).

231–233 is an L-serine binding site; sequence TAE. Residue 262 to 264 participates in ATP binding; sequence RSE. Residue glutamate 285 coordinates L-serine. 349 to 352 is an ATP binding site; that stretch reads EISS. Serine 383 is an L-serine binding site.

This sequence belongs to the class-II aminoacyl-tRNA synthetase family. Type-1 seryl-tRNA synthetase subfamily. In terms of assembly, homodimer. The tRNA molecule binds across the dimer.

It is found in the cytoplasm. The catalysed reaction is tRNA(Ser) + L-serine + ATP = L-seryl-tRNA(Ser) + AMP + diphosphate + H(+). It catalyses the reaction tRNA(Sec) + L-serine + ATP = L-seryl-tRNA(Sec) + AMP + diphosphate + H(+). The protein operates within aminoacyl-tRNA biosynthesis; selenocysteinyl-tRNA(Sec) biosynthesis; L-seryl-tRNA(Sec) from L-serine and tRNA(Sec): step 1/1. Catalyzes the attachment of serine to tRNA(Ser). Is also able to aminoacylate tRNA(Sec) with serine, to form the misacylated tRNA L-seryl-tRNA(Sec), which will be further converted into selenocysteinyl-tRNA(Sec). The sequence is that of Serine--tRNA ligase from Helicobacter pylori (strain J99 / ATCC 700824) (Campylobacter pylori J99).